The sequence spans 440 residues: MAHVTDFKEAGFNTLLEELEWRGLISQSTDRDRLAEALNGEPITYYCGFDPTAASLHIGNLVQLINMRHLQLAGHHPIALVGGATGLIGDPRQSGERTLNPKDVVAGWADRLKNQIGGILDTEGANAVRFVSNYDWTASMTVIDFLRDVGKNFRLGTMLAKDTVARRLNSEEGISFTEFSYQVLQGNDFLHLFDEYHCTLELGGSDQWGNLTSGLDLIHKVRGVDVNVFTSPIITDASGKKFGKSEGNAVWLDATMLSPYKFYQFWINRPDVEMESLLKAFTFLPKAEIERLVEESKTNPGKREAQKTLAWEVTSFVHGEAATQAAIDASGALFGRGGNLEDIDEETLESVLDGFKVVDENGEHVFPVSKPGDRVIDAAQAAGLFKSASEARRAIKSGGVYLNNNRIEDEEQVLAEADFLAGRFALIRRGKKALGAVENR.

Tyr-46 contributes to the L-tyrosine binding site. Positions 51-60 match the 'HIGH' region motif; it reads PTAASLHIGN. Positions 181 and 185 each coordinate L-tyrosine. The 'KMSKS' region motif lies at 241–245; it reads KFGKS. Lys-244 provides a ligand contact to ATP. One can recognise an S4 RNA-binding domain in the interval 373–439; it reads DRVIDAAQAA…GKKALGAVEN (67 aa).

Belongs to the class-I aminoacyl-tRNA synthetase family. TyrS type 1 subfamily. In terms of assembly, homodimer.

It is found in the cytoplasm. It carries out the reaction tRNA(Tyr) + L-tyrosine + ATP = L-tyrosyl-tRNA(Tyr) + AMP + diphosphate + H(+). Catalyzes the attachment of tyrosine to tRNA(Tyr) in a two-step reaction: tyrosine is first activated by ATP to form Tyr-AMP and then transferred to the acceptor end of tRNA(Tyr). The chain is Tyrosine--tRNA ligase from Bifidobacterium longum subsp. infantis (strain ATCC 15697 / DSM 20088 / JCM 1222 / NCTC 11817 / S12).